A 148-amino-acid chain; its full sequence is Photosystem II extrinsic protein U, chloroplastic (148 aa).

Residues 1–32 constitute a chloroplast transit peptide; the sequence is MKLAVFAVLISTVAAFVAPNGVQRAATTELNA. The N-terminal 22 residues, 33 to 54, are a transit peptide targeting the thylakoid; sequence ERREFLSAAAVAAGLAFPLTAN.

This sequence belongs to the PsbU family. As to quaternary structure, PSII is composed of 1 copy each of membrane proteins PsbA, PsbB, PsbC, PsbD, PsbE, PsbF, PsbH, PsbI, PsbJ, PsbK, PsbL, PsbM, PsbT, PsbX, PsbY, PsbZ, Psb30/Ycf12, at least 3 peripheral proteins of the oxygen-evolving complex and a large number of cofactors. It forms dimeric complexes. The oxygen-evolving complex may be composed of PsbO, PsbQ', PsbV and PsbU.

It is found in the plastid. Its subcellular location is the chloroplast thylakoid membrane. Functionally, one of the extrinsic, lumenal subunits of photosystem II (PSII), which stabilize and protect the oxygen-evolving complex. PSII is a light-driven water plastoquinone oxidoreductase, using light energy to abstract electrons from H(2)O, generating a proton gradient subsequently used for ATP formation. Stabilizes the structure of photosystem II oxygen-evolving complex (OEC), the ion environment of oxygen evolution and protects the OEC against heat-induced inactivation. In Phaeodactylum tricornutum (Diatom), this protein is Photosystem II extrinsic protein U, chloroplastic.